The chain runs to 139 residues: Nucleoside diphosphate kinase (139 aa).

The ATP site is built by Lys10, Phe58, Arg86, Thr92, Arg104, and Asn114. Catalysis depends on His117, which acts as the Pros-phosphohistidine intermediate.

The protein belongs to the NDK family. In terms of assembly, homotetramer. The cofactor is Mg(2+).

Its subcellular location is the cytoplasm. It catalyses the reaction a 2'-deoxyribonucleoside 5'-diphosphate + ATP = a 2'-deoxyribonucleoside 5'-triphosphate + ADP. The enzyme catalyses a ribonucleoside 5'-diphosphate + ATP = a ribonucleoside 5'-triphosphate + ADP. Its function is as follows. Major role in the synthesis of nucleoside triphosphates other than ATP. The ATP gamma phosphate is transferred to the NDP beta phosphate via a ping-pong mechanism, using a phosphorylated active-site intermediate. In Nocardia farcinica (strain IFM 10152), this protein is Nucleoside diphosphate kinase.